The following is a 324-amino-acid chain: Putative ribose-phosphate pyrophosphokinase 1 (324 aa).

Residues 43–45 and 102–103 each bind ATP; these read DGE and RQ. H136 provides a ligand contact to Mg(2+). D-ribose 5-phosphate is bound by residues D225 and 229–233; that span reads NTGQT.

Belongs to the ribose-phosphate pyrophosphokinase family. Class I subfamily. As to quaternary structure, homohexamer. It depends on Mg(2+) as a cofactor.

The protein localises to the cytoplasm. It carries out the reaction D-ribose 5-phosphate + ATP = 5-phospho-alpha-D-ribose 1-diphosphate + AMP + H(+). Its pathway is metabolic intermediate biosynthesis; 5-phospho-alpha-D-ribose 1-diphosphate biosynthesis; 5-phospho-alpha-D-ribose 1-diphosphate from D-ribose 5-phosphate (route I): step 1/1. In terms of biological role, involved in the biosynthesis of the central metabolite phospho-alpha-D-ribosyl-1-pyrophosphate (PRPP) via the transfer of pyrophosphoryl group from ATP to 1-hydroxyl of ribose-5-phosphate (Rib-5-P). This Enterococcus faecalis (strain ATCC 700802 / V583) protein is Putative ribose-phosphate pyrophosphokinase 1.